A 233-amino-acid chain; its full sequence is uncharacterized protein (233 aa).

The N-terminal stretch at 1–23 (MEIKYFLVLLVGFLLVLPSIVNP) is a signal peptide. Residues 42 to 217 (LDVNNPHNPN…HHHHQEASEC (176 aa)) form a disordered region. Low complexity predominate over residues 45-64 (NNPHNPNNNPHNPHNPNNNP). The span at 65–211 (HHPHHLHHHH…HPHPHHHHHH (147 aa)) shows a compositional bias: basic residues.

It is found in the secreted. This is an uncharacterized protein from Dictyostelium discoideum (Social amoeba).